A 294-amino-acid polypeptide reads, in one-letter code: N-acetylmuramic acid 6-phosphate etherase (294 aa).

Residues T56–K219 enclose the SIS domain. Residue E84 is the Proton donor of the active site. E115 is a catalytic residue.

The protein belongs to the GCKR-like family. MurNAc-6-P etherase subfamily. In terms of assembly, homodimer.

It carries out the reaction N-acetyl-D-muramate 6-phosphate + H2O = N-acetyl-D-glucosamine 6-phosphate + (R)-lactate. The protein operates within amino-sugar metabolism; 1,6-anhydro-N-acetylmuramate degradation. It functions in the pathway amino-sugar metabolism; N-acetylmuramate degradation. Its pathway is cell wall biogenesis; peptidoglycan recycling. Specifically catalyzes the cleavage of the D-lactyl ether substituent of MurNAc 6-phosphate, producing GlcNAc 6-phosphate and D-lactate. Together with AnmK, is also required for the utilization of anhydro-N-acetylmuramic acid (anhMurNAc) either imported from the medium or derived from its own cell wall murein, and thus plays a role in cell wall recycling. The polypeptide is N-acetylmuramic acid 6-phosphate etherase (Francisella tularensis subsp. tularensis (strain SCHU S4 / Schu 4)).